We begin with the raw amino-acid sequence, 291 residues long: N-acetylmannosamine kinase (291 aa).

ATP-binding positions include Ala-5–Lys-12 and Gly-132–Ser-139. Residues His-156, Cys-166, Cys-168, and Cys-173 each coordinate Zn(2+).

Belongs to the ROK (NagC/XylR) family. NanK subfamily. Homodimer.

It catalyses the reaction an N-acyl-D-mannosamine + ATP = an N-acyl-D-mannosamine 6-phosphate + ADP + H(+). The protein operates within amino-sugar metabolism; N-acetylneuraminate degradation; D-fructose 6-phosphate from N-acetylneuraminate: step 2/5. In terms of biological role, catalyzes the phosphorylation of N-acetylmannosamine (ManNAc) to ManNAc-6-P. The chain is N-acetylmannosamine kinase from Escherichia coli O6:K15:H31 (strain 536 / UPEC).